We begin with the raw amino-acid sequence, 356 residues long: Butyrate kinase 2 (356 aa).

It belongs to the acetokinase family. Homodimer.

It is found in the cytoplasm. It carries out the reaction butanoate + ATP = butanoyl phosphate + ADP. Its pathway is lipid metabolism; butanoate metabolism. Functionally, catalyzes the conversion of butyryl-CoA through butyryl phosphate to butyrate. The protein is Butyrate kinase 2 (buk2) of Clostridium acetobutylicum (strain ATCC 824 / DSM 792 / JCM 1419 / IAM 19013 / LMG 5710 / NBRC 13948 / NRRL B-527 / VKM B-1787 / 2291 / W).